The following is a 265-amino-acid chain: Speedy protein E13 (265 aa).

A disordered region spans residues 1–80 (MGQILGKIMM…EPEKELAPEP (80 aa)). The segment covering 66 to 80 (DESDDEPEKELAPEP) has biased composition (acidic residues).

The protein belongs to the Speedy/Ringo family.

This is Speedy protein E13 from Homo sapiens (Human).